We begin with the raw amino-acid sequence, 365 residues long: 3-methyl-L-tyrosine peroxygenase (365 aa).

313–317 (HIGVC) lines the heme pocket.

Requires heme as cofactor.

The enzyme catalyses 3-methyl-L-tyrosine + H2O2 = 5-hydroxy-3-methyl-L-tyrosine + H2O. The protein operates within antibiotic biosynthesis. Heme-containing peroxygenase that mediates the hydroxylation of 3-methyl-L-tyrosine (3-Me-Tyr) into 3-hydroxy-5-methyl-L-tyrosine (3-OH-5-Me-Tyr) in biosynthesis of saframycin A, a potent antitumor antibiotic that belongs to the tetrahydroisoquinoline family. Involved in biosynthesis of 3-hydroxy-5-methyl-O-methyltyrosine (3-OH-5-Me-OMe-Tyr), a core structure of saframycin A. This chain is 3-methyl-L-tyrosine peroxygenase, found in Streptomyces lavendulae.